A 198-amino-acid polypeptide reads, in one-letter code: Segregation and condensation protein B (198 aa).

This sequence belongs to the ScpB family. As to quaternary structure, homodimer. Homodimerization may be required to stabilize the binding of ScpA to the Smc head domains. Component of a cohesin-like complex composed of ScpA, ScpB and the Smc homodimer, in which ScpA and ScpB bind to the head domain of Smc. The presence of the three proteins is required for the association of the complex with DNA.

The protein resides in the cytoplasm. Its function is as follows. Participates in chromosomal partition during cell division. May act via the formation of a condensin-like complex containing Smc and ScpA that pull DNA away from mid-cell into both cell halves. The protein is Segregation and condensation protein B of Streptococcus mutans serotype c (strain ATCC 700610 / UA159).